Consider the following 146-residue polypeptide: Hemoglobin subunit beta (146 aa).

At valine 1 the chain carries N-acetylvaline. Residues glutamine 2–histidine 146 form the Globin domain. Serine 44 carries the phosphoserine modification. Position 59 is an N6-acetyllysine (lysine 59). Heme b is bound at residue histidine 63. Position 82 is an N6-acetyllysine (lysine 82). Histidine 92 provides a ligand contact to heme b. An S-nitrosocysteine modification is found at cysteine 93. Residue lysine 144 is modified to N6-acetyllysine.

The protein belongs to the globin family. Heterotetramer of two alpha chains and two beta chains. Red blood cells.

In terms of biological role, involved in oxygen transport from the lung to the various peripheral tissues. The polypeptide is Hemoglobin subunit beta (HBB) (Equus caballus (Horse)).